We begin with the raw amino-acid sequence, 221 residues long: MKAFLGALEFQENEYEELKELYESLKTKQKPHTLFISCVDSRVVPNLITGTKPGELYVICNMGNVNPPKTSYKESLSTIASIEYAIAHVGVQNLIICGHSDCGACGSVHLIHDETTKAKTPYIANWIQFLEPVKEELKNHPQFSNHFAKRSWLTERLNARLQLNNLLSYDFIQEKASKNELKIFGWHYIIETGRIYNYNFESHFFEPIGETIKQRKSHENF.

Zn(2+) is bound by residues C38, D40, H99, and C102.

This sequence belongs to the beta-class carbonic anhydrase family. The cofactor is Zn(2+).

The catalysed reaction is hydrogencarbonate + H(+) = CO2 + H2O. The sequence is that of Carbonic anhydrase (cynT) from Helicobacter pylori (strain ATCC 700392 / 26695) (Campylobacter pylori).